The chain runs to 342 residues: Phosphate acyltransferase (342 aa).

It belongs to the PlsX family. In terms of assembly, homodimer. Probably interacts with PlsY.

The protein localises to the cytoplasm. The enzyme catalyses a fatty acyl-[ACP] + phosphate = an acyl phosphate + holo-[ACP]. It participates in lipid metabolism; phospholipid metabolism. In terms of biological role, catalyzes the reversible formation of acyl-phosphate (acyl-PO(4)) from acyl-[acyl-carrier-protein] (acyl-ACP). This enzyme utilizes acyl-ACP as fatty acyl donor, but not acyl-CoA. The protein is Phosphate acyltransferase of Shewanella halifaxensis (strain HAW-EB4).